The primary structure comprises 624 residues: PTS system mannitol-specific EIICBA component (624 aa).

The 324-residue stretch at 13–336 folds into the PTS EIIC type-2 domain; sequence FGRFLSNMVM…SFVIASFFLK (324 aa). Transmembrane regions (helical) follow at residues 25–46, 51–71, 135–156, 166–186, 274–293, and 314–335; these read IGAFIAWGFITALFIPTGWLPN, KLVGPMITYLLPLLIGYSGGK, SSGIIGMILAILFFWLIGPAVK, VDILVKAHLLPLTSIFVEPAK, VIAGGVSGVFTLVLFNAGLV, and VGVLASVAIAATVSFVIASFFL. One can recognise a PTS EIIB type-2 domain in the interval 372–463; sequence QKIFVACDAG…LVQDLSNTKV (92 aa). Catalysis depends on C378, which acts as the Phosphocysteine intermediate; for EIIB activity. A Phosphocysteine; by EIIA modification is found at C378. Positions 482–624 constitute a PTS EIIA type-2 domain; it reads FVLTEKQVFL…VEKVLALLKA (143 aa). H542 functions as the Tele-phosphohistidine intermediate; for EIIA activity in the catalytic mechanism. H542 is modified (phosphohistidine; by HPr).

In terms of assembly, homodimer. In terms of processing, an intramolecular phosphotransfer takes places between His-542 and Cys-378.

The protein resides in the cell inner membrane. The enzyme catalyses D-mannitol(out) + N(pros)-phospho-L-histidyl-[protein] = D-mannitol 1-phosphate(in) + L-histidyl-[protein]. In terms of biological role, the phosphoenolpyruvate-dependent sugar phosphotransferase system (sugar PTS), a major carbohydrate active transport system, catalyzes the phosphorylation of incoming sugar substrates concomitantly with their translocation across the cell membrane. This system is involved in D-mannitol transport. The chain is PTS system mannitol-specific EIICBA component (mtlA) from Pasteurella multocida (strain Pm70).